The chain runs to 500 residues: Organic cation/carnitine transporter 7 (500 aa).

At 1–23 (MADGNTRFTVDEALVAMGFGKFQ) the chain is on the cytoplasmic side. Residues 24–44 (IYVLAYAGMGWVAEAMEMMLL) form a helical membrane-spanning segment. Topologically, residues 45 to 62 (SFVGPAVQSLWNLSARQE) are extracellular. N56 carries N-linked (GlcNAc...) asparagine glycosylation. A helical membrane pass occupies residues 63–83 (SLITSVVFAGMLIGAYSWGIV). Residues 84 to 97 (SDKHGRRKGFIITA) are Cytoplasmic-facing. Residues 98 to 118 (VVTFVAGFLSAFSPNYMWLII) form a helical membrane-spanning segment. Over 119-120 (LR) the chain is Extracellular. The helical transmembrane segment at 121–141 (CLVGLGLGGGPVLASWYLEFI) threads the bilayer. 137 to 144 (YLEFIPAP) provides a ligand contact to ATP. Residues 142–150 (PAPSRGTWM) are Cytoplasmic-facing. A helical membrane pass occupies residues 151 to 171 (VVFSAFWTVGTIFEASLAWLV). Over 172 to 174 (MPR) the chain is Extracellular. A helical membrane pass occupies residues 175–195 (LGWRWLLAFSSVPSSLLLLFY). Residues 196–293 (RWTSESPRYL…ALLSPTLMKR (98 aa)) lie on the Cytoplasmic side of the membrane. The helical transmembrane segment at 294–314 (TLLLWVVFFGNAFAYYGVVLL) threads the bilayer. Residues 315–341 (TTELNNSHNRCYPTEKQLRNSNDVNYR) are Extracellular-facing. An N-linked (GlcNAc...) asparagine glycan is attached at N319. The helical transmembrane segment at 342 to 362 (DVFIASFAEFPGLLISAAMVD) threads the bilayer. Residues 363–367 (RLGRK) are Cytoplasmic-facing. Residues 368-387 (ASMASMLFTCCIFLLPLLSH) form a helical membrane-spanning segment. Residues 388-401 (QSPFITTVLLFGGR) are Extracellular-facing. The helical transmembrane segment at 402-422 (ICISAAFTVVYIYAPEIYPTA) threads the bilayer. The Cytoplasmic segment spans residues 423 to 429 (VRTTGVG). The chain crosses the membrane as a helical span at residues 430–450 (VGSSVGRIGGILCPLVAVGLV). The Extracellular segment spans residues 451 to 456 (HGCHQT). A helical transmembrane segment spans residues 457–477 (IAVLLFEVVILVSGICVCLFP). The Cytoplasmic segment spans residues 478 to 500 (FETSGRDLTDSISASKEPPSASV).

Belongs to the major facilitator (TC 2.A.1) superfamily. Organic cation transporter (TC 2.A.1.19) family. In terms of tissue distribution, expressed in pollen.

Its subcellular location is the membrane. Functionally, high affinity carnitine transporter involved in the active cellular uptake of carnitine. Also transports organic cations. This is Organic cation/carnitine transporter 7 (OCT7) from Arabidopsis thaliana (Mouse-ear cress).